The sequence spans 223 residues: MNTSMQTYLVTQEDRSAGRSTTEIVEAAIDGGIDIVQLREKETTARRRYEIGQTVRTQTAQAGVTFLVNDRVDLAAAVNADGVHLGDDDLPVTAAREVLGQDAIIGRSVSTPAAAQRAEDIGADYLGVGAVYPTGTKDVTAESAEIGPKTVTAITDAVSIPVIGIGGITPSNTTEVIRAGADGVAVVSAITTADDPAAATRKLQGSVDTASVESQLPSEEPSA.

4-amino-2-methyl-5-(diphosphooxymethyl)pyrimidine-binding positions include 37–41 and Asn69; that span reads QLREK. Positions 70 and 89 each coordinate Mg(2+). Residue Ser108 participates in 4-amino-2-methyl-5-(diphosphooxymethyl)pyrimidine binding. 134 to 136 serves as a coordination point for 2-[(2R,5Z)-2-carboxy-4-methylthiazol-5(2H)-ylidene]ethyl phosphate; it reads TGT. Lys137 lines the 4-amino-2-methyl-5-(diphosphooxymethyl)pyrimidine pocket. Residues Gly167 and 187-188 each bind 2-[(2R,5Z)-2-carboxy-4-methylthiazol-5(2H)-ylidene]ethyl phosphate; that span reads VS. A disordered region spans residues 197 to 223; that stretch reads AAATRKLQGSVDTASVESQLPSEEPSA. Residues 206–217 are compositionally biased toward polar residues; the sequence is SVDTASVESQLP.

Belongs to the thiamine-phosphate synthase family. The cofactor is Mg(2+).

It catalyses the reaction 2-[(2R,5Z)-2-carboxy-4-methylthiazol-5(2H)-ylidene]ethyl phosphate + 4-amino-2-methyl-5-(diphosphooxymethyl)pyrimidine + 2 H(+) = thiamine phosphate + CO2 + diphosphate. The enzyme catalyses 2-(2-carboxy-4-methylthiazol-5-yl)ethyl phosphate + 4-amino-2-methyl-5-(diphosphooxymethyl)pyrimidine + 2 H(+) = thiamine phosphate + CO2 + diphosphate. The catalysed reaction is 4-methyl-5-(2-phosphooxyethyl)-thiazole + 4-amino-2-methyl-5-(diphosphooxymethyl)pyrimidine + H(+) = thiamine phosphate + diphosphate. Its pathway is cofactor biosynthesis; thiamine diphosphate biosynthesis; thiamine phosphate from 4-amino-2-methyl-5-diphosphomethylpyrimidine and 4-methyl-5-(2-phosphoethyl)-thiazole: step 1/1. In terms of biological role, condenses 4-methyl-5-(beta-hydroxyethyl)thiazole monophosphate (THZ-P) and 2-methyl-4-amino-5-hydroxymethyl pyrimidine pyrophosphate (HMP-PP) to form thiamine monophosphate (TMP). The chain is Thiamine-phosphate synthase from Haloquadratum walsbyi (strain DSM 16790 / HBSQ001).